Reading from the N-terminus, the 957-residue chain is Translation initiation factor IF-2 (957 aa).

Disordered stretches follow at residues 34–282 (KSHS…RVVK) and 311–367 (SQSL…TIAG). Positions 107–161 (PARPQPPQAPTRPTPPAPVAPKPVEPVAAKPPAPPAKPEPTPPRPVPTLVPPPTR) are enriched in pro residues. Positions 163-188 (TKKEEKVAATPPPRKELKEPPKKEKG) are enriched in basic and acidic residues. A compositionally biased stretch (pro residues) spans 209–242 (PPAPAKPPEMAPKPALPELQPPPKPVRAPNPPKP). 2 stretches are compositionally biased toward basic and acidic residues: residues 250–259 (LDDKSVSKVI) and 266–275 (KDFDEEESKR). In terms of domain architecture, tr-type G spans 444 to 617 (RRPPVVTIMG…LLVAEVEDLY (174 aa)). The interval 453–460 (GHVDHGKT) is G1. 453–460 (GHVDHGKT) is a GTP binding site. Positions 478–482 (GITQH) are G2. Residues 503-506 (DTPG) form a G3 region. GTP-binding positions include 503–507 (DTPGH) and 557–560 (NKID). The interval 557–560 (NKID) is G4. A G5 region spans residues 593–595 (SAL).

Belongs to the TRAFAC class translation factor GTPase superfamily. Classic translation factor GTPase family. IF-2 subfamily.

It localises to the cytoplasm. In terms of biological role, one of the essential components for the initiation of protein synthesis. Protects formylmethionyl-tRNA from spontaneous hydrolysis and promotes its binding to the 30S ribosomal subunits. Also involved in the hydrolysis of GTP during the formation of the 70S ribosomal complex. This is Translation initiation factor IF-2 from Thermosynechococcus vestitus (strain NIES-2133 / IAM M-273 / BP-1).